The sequence spans 398 residues: 4-hydroxy-3-methylbut-2-en-1-yl diphosphate synthase (ferredoxin) (398 aa).

[4Fe-4S] cluster-binding residues include Cys306, Cys309, Cys340, and Glu347.

Belongs to the IspG family. The cofactor is [4Fe-4S] cluster.

It catalyses the reaction (2E)-4-hydroxy-3-methylbut-2-enyl diphosphate + 2 oxidized [2Fe-2S]-[ferredoxin] + H2O = 2-C-methyl-D-erythritol 2,4-cyclic diphosphate + 2 reduced [2Fe-2S]-[ferredoxin] + H(+). It functions in the pathway isoprenoid biosynthesis; isopentenyl diphosphate biosynthesis via DXP pathway; isopentenyl diphosphate from 1-deoxy-D-xylulose 5-phosphate: step 5/6. Its function is as follows. Converts 2C-methyl-D-erythritol 2,4-cyclodiphosphate (ME-2,4cPP) into 1-hydroxy-2-methyl-2-(E)-butenyl 4-diphosphate. The chain is 4-hydroxy-3-methylbut-2-en-1-yl diphosphate synthase (ferredoxin) from Parasynechococcus marenigrum (strain WH8102).